We begin with the raw amino-acid sequence, 1514 residues long: Mitogen-activated protein kinase-binding protein 1 (1514 aa).

Alanine 2 bears the N-acetylalanine mark. WD repeat units follow at residues 88–129 (SSRK…QVAE), 132–173 (EHKY…VVAS), 175–213 (KVSSRVTAVSFSEDCSYFVTAGNRHIKFWYLDDSKTSKV), 276–315 (DSFTTTVAHCISVSQDYIFCGCADGTVRLFNPSNLHFLST), 342–381 (ARYPDTIALTFDPTNQWLSCVYNDHSIYVWDVRDPKKVGK), 387–436 (YHSS…VHGS), 477–516 (DPRVGIRSVCVSPNGQHLASGDRMGTLRVHELQSLSEMLK), 519–561 (AHDS…SLQQ), 565–606 (EHSS…DGVQ), 614–653 (VRKTTLYDMDVEPSWKYTAIGCQDRNIRIFNISSGKQKKL), 659–698 (GEDGTLIKVQTDPSGIYIATSCSDKNLSIFDFSSGECVAT), and 701–740 (GHSEIVTGMKFSNDCKHLISVSGDSCIFVWRLSSEMTISM). Disordered stretches follow at residues 748–804 (RQRQ…PALP), 880–925 (PSLQ…SQPC), 951–1256 (EDGI…SSMA), and 1299–1336 (DIPKPLPDRPTLAAFSPVTKGRAPGEAEKPGFPVGLGK). The segment covering 789-800 (KEGEDEGTEEEL) has biased composition (acidic residues). Composition is skewed to polar residues over residues 905-925 (LETSLTSQNEKPPRPQASQPC) and 961-971 (DNPTMDTSEFQ). Over residues 996-1011 (DSACSVDYSSSCLSSP) the composition is skewed to low complexity. Over residues 1032-1048 (DLEEPAEGDEEEEEEEG) the composition is skewed to acidic residues. Residues 1113–1126 (PSPSSSSLALMSRP) show a composition bias toward low complexity. Composition is skewed to polar residues over residues 1188-1200 (SPFSGLQKAQSVH) and 1245-1256 (HSYQNPTTSSMA). Serine 1198 carries the post-translational modification Phosphoserine.

In terms of assembly, can form homodimers (via C-terminus). Interacts (via C-terminus) with WDR62 (via C-terminus). Interacts with MAPK9. Interacts (via N-terminus) with NOD2; the interaction is enhanced in presence of muramyl dipeptide (MDP). Interacts with MAPK10. Expressed in intestinal mucosa, where it is detected in epithelial cells, endothelial cells, smooth muscle cells and immune cells, such as lymphocytes. Expressed in kidney.

Its subcellular location is the cytoplasm. It is found in the nucleus. The protein resides in the cytoskeleton. The protein localises to the spindle pole. Negative regulator of NOD2 function. It down-regulates NOD2-induced processes such as activation of NF-kappa-B signaling, IL8 secretion and antibacterial response. Involved in JNK signaling pathway. In Homo sapiens (Human), this protein is Mitogen-activated protein kinase-binding protein 1 (MAPKBP1).